Here is a 482-residue protein sequence, read N- to C-terminus: tRNA sulfurtransferase (482 aa).

The 105-residue stretch at 61-165 (PAIRDALTRI…NDRLLLVKGR (105 aa)) folds into the THUMP domain. ATP-binding positions include 183–184 (LI), Lys-265, Gly-287, and Gln-296. Cys-344 and Cys-456 are oxidised to a cystine. The 79-residue stretch at 404–482 (FGANDAILDI…GFSNVKVYRP (79 aa)) folds into the Rhodanese domain. The active-site Cysteine persulfide intermediate is the Cys-456.

It belongs to the ThiI family.

The protein resides in the cytoplasm. The catalysed reaction is [ThiI sulfur-carrier protein]-S-sulfanyl-L-cysteine + a uridine in tRNA + 2 reduced [2Fe-2S]-[ferredoxin] + ATP + H(+) = [ThiI sulfur-carrier protein]-L-cysteine + a 4-thiouridine in tRNA + 2 oxidized [2Fe-2S]-[ferredoxin] + AMP + diphosphate. It catalyses the reaction [ThiS sulfur-carrier protein]-C-terminal Gly-Gly-AMP + S-sulfanyl-L-cysteinyl-[cysteine desulfurase] + AH2 = [ThiS sulfur-carrier protein]-C-terminal-Gly-aminoethanethioate + L-cysteinyl-[cysteine desulfurase] + A + AMP + 2 H(+). It functions in the pathway cofactor biosynthesis; thiamine diphosphate biosynthesis. Catalyzes the ATP-dependent transfer of a sulfur to tRNA to produce 4-thiouridine in position 8 of tRNAs, which functions as a near-UV photosensor. Also catalyzes the transfer of sulfur to the sulfur carrier protein ThiS, forming ThiS-thiocarboxylate. This is a step in the synthesis of thiazole, in the thiamine biosynthesis pathway. The sulfur is donated as persulfide by IscS. This Klebsiella pneumoniae (strain 342) protein is tRNA sulfurtransferase.